A 195-amino-acid chain; its full sequence is Small ribosomal subunit protein uS4B (195 aa).

In terms of domain architecture, S4 RNA-binding spans 107 to 181 (RRLQTQVYKL…VARRNAARKA (75 aa)). A disordered region spans residues 161–195 (TSPFGGARPGRVARRNAARKAEASGEAAEEAEDEE). Residue Lys-180 forms a Glycyl lysine isopeptide (Lys-Gly) (interchain with G-Cter in ubiquitin) linkage. At Ser-184 the chain carries Phosphoserine.

It belongs to the universal ribosomal protein uS4 family. As to quaternary structure, component of the small ribosomal subunit (SSU). Mature yeast ribosomes consist of a small (40S) and a large (60S) subunit. The 40S small subunit contains 1 molecule of ribosomal RNA (18S rRNA) and 33 different proteins (encoded by 57 genes). The large 60S subunit contains 3 rRNA molecules (25S, 5.8S and 5S rRNA) and 46 different proteins (encoded by 81 genes). Interacts with snoRNA U3. uS11 interacts with MPP10. Component of the ribosomal small subunit (SSU) processome composed of at least 40 protein subunits and snoRNA U3.

The protein resides in the cytoplasm. The protein localises to the nucleus. It is found in the nucleolus. In terms of biological role, component of the ribosome, a large ribonucleoprotein complex responsible for the synthesis of proteins in the cell. The small ribosomal subunit (SSU) binds messenger RNAs (mRNAs) and translates the encoded message by selecting cognate aminoacyl-transfer RNA (tRNA) molecules. The large subunit (LSU) contains the ribosomal catalytic site termed the peptidyl transferase center (PTC), which catalyzes the formation of peptide bonds, thereby polymerizing the amino acids delivered by tRNAs into a polypeptide chain. The nascent polypeptides leave the ribosome through a tunnel in the LSU and interact with protein factors that function in enzymatic processing, targeting, and the membrane insertion of nascent chains at the exit of the ribosomal tunnel. uS4 is involved in nucleolar processing of pre-18S ribosomal RNA and ribosome assembly. The protein is Small ribosomal subunit protein uS4B of Saccharomyces cerevisiae (strain ATCC 204508 / S288c) (Baker's yeast).